Here is a 269-residue protein sequence, read N- to C-terminus: Surfeit locus protein 4 (269 aa).

A run of 5 helical transmembrane segments spans residues 64–84 (LLAS…CVLV), 92–112 (YACF…SILW), 179–199 (FFSI…AIGF), 203–223 (LAAL…NAFW), and 239–259 (FFQT…GPGG). A Di-lysine motif motif is present at residues 266–269 (KKEW).

Belongs to the SURF4 family. As to quaternary structure, found in a complex composed at least of SURF4, TMED2 and TMED10. May interact with LMAN1. Interacts with ZFYVE27 and with KIF5A in a ZFYVE27-dependent manner. Interacts with STING1. Interacts with SAR1B. Interacts with TMEM41B.

It localises to the endoplasmic reticulum membrane. Its subcellular location is the endoplasmic reticulum-Golgi intermediate compartment membrane. The protein resides in the golgi apparatus membrane. Its function is as follows. Endoplasmic reticulum cargo receptor that mediates the export of lipoproteins by recruiting cargos into COPII vesicles to facilitate their secretion. Acts as a cargo receptor for lipoproteins bearing both APOB and APOA1, thereby regulating lipoprotein delivery and the maintenance of lipid homeostasis. Synergizes with the GTPase SAR1B to mediate transport of circulating lipoproteins. Promotes the secretion of PCSK9. Also mediates the efficient secretion of erythropoietin (EPO). May also play a role in the maintenance of the architecture of the endoplasmic reticulum-Golgi intermediate compartment and of the Golgi. The sequence is that of Surfeit locus protein 4 from Homo sapiens (Human).